The sequence spans 477 residues: D(1B) dopamine receptor (477 aa).

The Extracellular segment spans residues 1–39; that stretch reads MLPPGSNGTAYPGQFALYQQLAQGNAVGGSAGAPPLGPS. N-linked (GlcNAc...) asparagine glycosylation occurs at Asn-7. The chain crosses the membrane as a helical span at residues 40-66; that stretch reads QVVTACLLTLLIIWTLLGNVLVCAAIV. Residues 67-77 lie on the Cytoplasmic side of the membrane; it reads RSRHLRANMTN. A helical membrane pass occupies residues 78-104; sequence VFIVSLAVSDLFVALLVMPWKAVAEVA. Topologically, residues 105-114 are extracellular; the sequence is GYWPFGAFCD. A disulfide bridge links Cys-113 with Cys-217. A helical membrane pass occupies residues 115–136; that stretch reads VWVAFDIMCSTASILNLCVISV. Topologically, residues 137–158 are cytoplasmic; that stretch reads DRYWAISRPFRYKRKMTQRMAL. A helical membrane pass occupies residues 159–180; the sequence is VMVGLAWTLSILISFIPVQLNW. Residues 181-223 lie on the Extracellular side of the membrane; sequence HRDQAASWGGLDLPNNLANWTPWEEDFWEPDVNAENCDSSLNR. An N-linked (GlcNAc...) asparagine glycan is attached at Asn-222. A helical membrane pass occupies residues 224 to 246; the sequence is TYAISSSLISFYIPVAIMIVTYT. The Cytoplasmic segment spans residues 247–296; it reads RIYRIAQVQIRRISSLERAAEHAQSCRSSAACAPDTSLRASIKKETKVLK. A helical membrane pass occupies residues 297 to 320; the sequence is TLSVIMGVFVCCWLPFFILNCMVP. Residues 321–340 lie on the Extracellular side of the membrane; it reads FCSGHPEGPPAGFPCVSETT. The helical transmembrane segment at 341–360 threads the bilayer; the sequence is FDVFVWFGWANSSLNPVIYA. The Cytoplasmic segment spans residues 361–477; it reads FNADFQKVFA…ITPFTPNGFH (117 aa). Residue Cys-375 is the site of S-palmitoyl cysteine attachment.

This sequence belongs to the G-protein coupled receptor 1 family. As to expression, neuron-specific, localized primarily within limbic regions of the brain.

The protein resides in the cell membrane. Its function is as follows. Dopamine receptor whose activity is mediated by G proteins which activate adenylyl cyclase. This chain is D(1B) dopamine receptor (DRD5), found in Homo sapiens (Human).